A 242-amino-acid chain; its full sequence is Phosphoribosylaminoimidazole-succinocarboxamide synthase (242 aa).

The protein belongs to the SAICAR synthetase family.

The enzyme catalyses 5-amino-1-(5-phospho-D-ribosyl)imidazole-4-carboxylate + L-aspartate + ATP = (2S)-2-[5-amino-1-(5-phospho-beta-D-ribosyl)imidazole-4-carboxamido]succinate + ADP + phosphate + 2 H(+). Its pathway is purine metabolism; IMP biosynthesis via de novo pathway; 5-amino-1-(5-phospho-D-ribosyl)imidazole-4-carboxamide from 5-amino-1-(5-phospho-D-ribosyl)imidazole-4-carboxylate: step 1/2. This Pediococcus pentosaceus (strain ATCC 25745 / CCUG 21536 / LMG 10740 / 183-1w) protein is Phosphoribosylaminoimidazole-succinocarboxamide synthase.